Consider the following 335-residue polypeptide: Homeobox protein DBX1 (335 aa).

Disordered regions lie at residues 56–102 (RSIP…LSPA) and 240–335 (KERE…ITVS). Over residues 83–95 (GSPGSGSRRGSSP) the composition is skewed to low complexity. The segment at residues 181–240 (GMLRRAVFSDVQRKALEKTFQKQKYISKPDRKKLASKLGLKDSQVKIWFQNRRMKWRNSK) is a DNA-binding region (homeobox). Low complexity predominate over residues 299 to 317 (GPLPASPAHSSSPGKPSDF). Positions 318–335 (SDSDEDEEGEEDEEITVS) are enriched in acidic residues.

This sequence belongs to the H2.0 homeobox family.

It localises to the nucleus. In terms of biological role, could have a role in patterning the central nervous system during embryogenesis. Has a key role in regulating the distinct phenotypic features that distinguish two major classes of ventral interneurons, V0 and V1 neurons. Regulates the transcription factor profile, neurotransmitter phenotype, intraspinal migratory path and axonal trajectory of V0 neurons, features that differentiate them from an adjacent set of V1 neurons. The polypeptide is Homeobox protein DBX1 (Dbx1) (Rattus norvegicus (Rat)).